Here is a 243-residue protein sequence, read N- to C-terminus: Triosephosphate isomerase (243 aa).

Residue 9 to 11 (NWK) coordinates substrate. Histidine 96 functions as the Electrophile in the catalytic mechanism. Glutamate 165 (proton acceptor) is an active-site residue. Residues glycine 171, serine 204, and 225 to 226 (GG) each bind substrate.

The protein belongs to the triosephosphate isomerase family. As to quaternary structure, homodimer.

The protein resides in the cytoplasm. The catalysed reaction is D-glyceraldehyde 3-phosphate = dihydroxyacetone phosphate. It functions in the pathway carbohydrate biosynthesis; gluconeogenesis. Its pathway is carbohydrate degradation; glycolysis; D-glyceraldehyde 3-phosphate from glycerone phosphate: step 1/1. In terms of biological role, involved in the gluconeogenesis. Catalyzes stereospecifically the conversion of dihydroxyacetone phosphate (DHAP) to D-glyceraldehyde-3-phosphate (G3P). The sequence is that of Triosephosphate isomerase from Synechococcus sp. (strain WH7803).